The chain runs to 345 residues: Ribosome production factor 1 (345 aa).

Disordered stretches follow at residues 1-57 (MAKA…ISEI) and 70-105 (WKQQQRKEKLAAKKKLKREREALGDKAPPKPVPKTI). A compositionally biased stretch (basic and acidic residues) spans 87 to 97 (REREALGDKAP). In terms of domain architecture, Brix spans 142–325 (PKILITTSDR…LRSLQKGTFD (184 aa)). An RNA-binding region spans residues 303 to 320 (VGIQELGPRFTLKLRSLQ).

It is found in the nucleus. The protein resides in the nucleolus. Its function is as follows. May be required for ribosome biogenesis. The sequence is that of Ribosome production factor 1 (Rpf1) from Rattus norvegicus (Rat).